We begin with the raw amino-acid sequence, 495 residues long: Acetyl-coenzyme A carboxylase carboxyl transferase subunit beta, chloroplastic (495 aa).

Positions 187-208 (ESRNSSENEGSSRRTRTKGSDL) are disordered. Residues 226–495 (LWVQCENCYG…PLNQKSSKIK (270 aa)) form the CoA carboxyltransferase N-terminal domain. Positions 230, 233, 249, and 252 each coordinate Zn(2+). The segment at 230-252 (CENCYGLNYKKFLKSKMNICEQC) adopts a C4-type zinc-finger fold.

This sequence belongs to the AccD/PCCB family. As to quaternary structure, acetyl-CoA carboxylase is a heterohexamer composed of biotin carboxyl carrier protein, biotin carboxylase and 2 subunits each of ACCase subunit alpha and ACCase plastid-coded subunit beta (accD). Zn(2+) serves as cofactor. RNA expressed in leaf, root and stem; the least expression occurs in stems.

Its subcellular location is the plastid. The protein resides in the chloroplast stroma. The catalysed reaction is N(6)-carboxybiotinyl-L-lysyl-[protein] + acetyl-CoA = N(6)-biotinyl-L-lysyl-[protein] + malonyl-CoA. It functions in the pathway lipid metabolism; malonyl-CoA biosynthesis; malonyl-CoA from acetyl-CoA: step 1/1. Functionally, component of the acetyl coenzyme A carboxylase (ACC) complex. Biotin carboxylase (BC) catalyzes the carboxylation of biotin on its carrier protein (BCCP) and then the CO(2) group is transferred by the transcarboxylase to acetyl-CoA to form malonyl-CoA. This is Acetyl-coenzyme A carboxylase carboxyl transferase subunit beta, chloroplastic from Nicotiana tabacum (Common tobacco).